A 584-amino-acid chain; its full sequence is tRNA-guanine(15) transglycosylase (584 aa).

Asp-95 (nucleophile) is an active-site residue. Residues Asp-130 and Gly-196 each contribute to the substrate site. Cys-279, Cys-281, and Cys-284 together coordinate Zn(2+). The region spanning 507–582 (RMRVVVSEEA…RAVKVRRGIS (76 aa)) is the PUA domain.

This sequence belongs to the archaeosine tRNA-ribosyltransferase family. Zn(2+) serves as cofactor.

It carries out the reaction guanosine(15) in tRNA + 7-cyano-7-deazaguanine = 7-cyano-7-carbaguanosine(15) in tRNA + guanine. Its pathway is tRNA modification; archaeosine-tRNA biosynthesis. Functionally, exchanges the guanine residue with 7-cyano-7-deazaguanine (preQ0) at position 15 in the dihydrouridine loop (D-loop) of archaeal tRNAs. The polypeptide is tRNA-guanine(15) transglycosylase (Pyrococcus abyssi (strain GE5 / Orsay)).